Here is a 310-residue protein sequence, read N- to C-terminus: tRNA dimethylallyltransferase (310 aa).

14 to 21 (GPTASGKT) provides a ligand contact to ATP. 16 to 21 (TASGKT) contributes to the substrate binding site. The segment at 39-42 (DSMQ) is interaction with substrate tRNA.

The protein belongs to the IPP transferase family. Monomer. Mg(2+) is required as a cofactor.

The enzyme catalyses adenosine(37) in tRNA + dimethylallyl diphosphate = N(6)-dimethylallyladenosine(37) in tRNA + diphosphate. Its function is as follows. Catalyzes the transfer of a dimethylallyl group onto the adenine at position 37 in tRNAs that read codons beginning with uridine, leading to the formation of N6-(dimethylallyl)adenosine (i(6)A). The sequence is that of tRNA dimethylallyltransferase from Corynebacterium jeikeium (strain K411).